A 337-amino-acid polypeptide reads, in one-letter code: Protein RecA (337 aa).

Residue 66 to 73 participates in ATP binding; that stretch reads GPESSGKT.

Belongs to the RecA family.

The protein localises to the cytoplasm. Functionally, can catalyze the hydrolysis of ATP in the presence of single-stranded DNA, the ATP-dependent uptake of single-stranded DNA by duplex DNA, and the ATP-dependent hybridization of homologous single-stranded DNAs. It interacts with LexA causing its activation and leading to its autocatalytic cleavage. The protein is Protein RecA of Mesomycoplasma hyopneumoniae (strain J / ATCC 25934 / NCTC 10110) (Mycoplasma hyopneumoniae).